The following is a 101-amino-acid chain: Urease subunit beta (101 aa).

This sequence belongs to the urease beta subunit family. In terms of assembly, heterotrimer of UreA (gamma), UreB (beta) and UreC (alpha) subunits. Three heterotrimers associate to form the active enzyme.

The protein resides in the cytoplasm. The catalysed reaction is urea + 2 H2O + H(+) = hydrogencarbonate + 2 NH4(+). It participates in nitrogen metabolism; urea degradation; CO(2) and NH(3) from urea (urease route): step 1/1. The polypeptide is Urease subunit beta (Cereibacter sphaeroides (strain ATCC 17029 / ATH 2.4.9) (Rhodobacter sphaeroides)).